The following is a 484-amino-acid chain: Putative amidase AmiA2 (484 aa).

Residues lysine 93 and serine 167 each act as charge relay system in the active site. The Acyl-ester intermediate role is filled by serine 191.

It belongs to the amidase family.

It catalyses the reaction a monocarboxylic acid amide + H2O = a monocarboxylate + NH4(+). This Mycobacterium bovis (strain ATCC BAA-935 / AF2122/97) protein is Putative amidase AmiA2 (amiA2).